Consider the following 356-residue polypeptide: Histidinol-phosphate aminotransferase 1 (356 aa).

Lys217 bears the N6-(pyridoxal phosphate)lysine mark.

The protein belongs to the class-II pyridoxal-phosphate-dependent aminotransferase family. Histidinol-phosphate aminotransferase subfamily. As to quaternary structure, homodimer. Pyridoxal 5'-phosphate is required as a cofactor.

The enzyme catalyses L-histidinol phosphate + 2-oxoglutarate = 3-(imidazol-4-yl)-2-oxopropyl phosphate + L-glutamate. It participates in amino-acid biosynthesis; L-histidine biosynthesis; L-histidine from 5-phospho-alpha-D-ribose 1-diphosphate: step 7/9. The protein is Histidinol-phosphate aminotransferase 1 of Burkholderia mallei (strain ATCC 23344).